The primary structure comprises 347 residues: GMP reductase (347 aa).

Position 108–131 (108–131 (ADFEKTKQILDLNPALNFVCIDVA)) interacts with NADP(+). G181 and G183 together coordinate K(+). C186 functions as the Thioimidate intermediate in the catalytic mechanism. 216–239 (IVSDGGCTTPGDVAKAFGGGADFV) is an NADP(+) binding site.

It belongs to the IMPDH/GMPR family. GuaC type 1 subfamily. As to quaternary structure, homotetramer.

It carries out the reaction IMP + NH4(+) + NADP(+) = GMP + NADPH + 2 H(+). Its function is as follows. Catalyzes the irreversible NADPH-dependent deamination of GMP to IMP. It functions in the conversion of nucleobase, nucleoside and nucleotide derivatives of G to A nucleotides, and in maintaining the intracellular balance of A and G nucleotides. In Escherichia coli O7:K1 (strain IAI39 / ExPEC), this protein is GMP reductase.